We begin with the raw amino-acid sequence, 475 residues long: MKYELVVGLEVHCQLNTNSKAFCGCSTRFGNPANTNVCPVCLALPGALPVLNRRVVEDAVKLGLATGCSIAPSSILARKNYFYPDLPKGYQISQFEEPICTEGMLRIDVGDGCRDIRLIRIHIEEDAGKSIHDIGDDTYIDVNRCGVPLLEIVSYPDIRTSREASAYLQKMRQIVKYLGISDGNMEEGSLRCDANVSVRLFGAEEYGTRTEIKNMNSFKNVEKAIEYEMQRHIDIIDGGGTIVQETRLWDADKGETRSMRGKEFAHDYRYFPDPDLVPVLVDQEMLERIRLELPEFPEDRERRFVSEYGIPPYDAGVLTVEREIADYFERTLTVCGDAKAASNWVMGEVMRTLKEKYLDIKEFAISPERLGGLIGLIGKGAISNTIAKQVFELMQTGEASAEEIVDREGLAQVSDTGAIERTVDEILEANPKQLADYREGKTKLFGFFVGQCMARMKGKANPQVVNDVLKSRLDG.

Belongs to the GatB/GatE family. GatB subfamily. As to quaternary structure, heterotrimer of A, B and C subunits.

It carries out the reaction L-glutamyl-tRNA(Gln) + L-glutamine + ATP + H2O = L-glutaminyl-tRNA(Gln) + L-glutamate + ADP + phosphate + H(+). The enzyme catalyses L-aspartyl-tRNA(Asn) + L-glutamine + ATP + H2O = L-asparaginyl-tRNA(Asn) + L-glutamate + ADP + phosphate + 2 H(+). In terms of biological role, allows the formation of correctly charged Asn-tRNA(Asn) or Gln-tRNA(Gln) through the transamidation of misacylated Asp-tRNA(Asn) or Glu-tRNA(Gln) in organisms which lack either or both of asparaginyl-tRNA or glutaminyl-tRNA synthetases. The reaction takes place in the presence of glutamine and ATP through an activated phospho-Asp-tRNA(Asn) or phospho-Glu-tRNA(Gln). The sequence is that of Aspartyl/glutamyl-tRNA(Asn/Gln) amidotransferase subunit B from Chlorobium limicola (strain DSM 245 / NBRC 103803 / 6330).